The sequence spans 91 residues: Small ribosomal subunit protein uS15 (91 aa).

This sequence belongs to the universal ribosomal protein uS15 family. In terms of assembly, part of the 30S ribosomal subunit. Forms a bridge to the 50S subunit in the 70S ribosome, contacting the 23S rRNA.

One of the primary rRNA binding proteins, it binds directly to 16S rRNA where it helps nucleate assembly of the platform of the 30S subunit by binding and bridging several RNA helices of the 16S rRNA. Functionally, forms an intersubunit bridge (bridge B4) with the 23S rRNA of the 50S subunit in the ribosome. This chain is Small ribosomal subunit protein uS15, found in Hydrogenobaculum sp. (strain Y04AAS1).